The primary structure comprises 808 residues: Piwi-like protein 1 (808 aa).

Residues 214-333 enclose the PAZ domain; the sequence is RINRVLNENN…IPGELCYLCG (120 aa). The tract at residues 300-322 is disordered; the sequence is SMVRPKEKTENEPEGPTETDQSL. A Piwi domain is found at 492 to 790; sequence HMALVFIPDD…LAELVGKIHR (299 aa).

It belongs to the argonaute family. Piwi subfamily. Expressed in dividing adult somatic stem cells (neoblasts).

The protein is Piwi-like protein 1 (wi-1) of Schmidtea mediterranea (Freshwater planarian flatworm).